The chain runs to 212 residues: Cytochrome c biogenesis ATP-binding export protein CcmA (212 aa).

In terms of domain architecture, ABC transporter spans 8-212 (LQATALACER…RSIDLAKGSA (205 aa)). 40-47 (GPNGSGKT) provides a ligand contact to ATP.

The protein belongs to the ABC transporter superfamily. CcmA exporter (TC 3.A.1.107) family. The complex is composed of two ATP-binding proteins (CcmA) and two transmembrane proteins (CcmB).

Its subcellular location is the cell inner membrane. The enzyme catalyses heme b(in) + ATP + H2O = heme b(out) + ADP + phosphate + H(+). Its function is as follows. Part of the ABC transporter complex CcmAB involved in the biogenesis of c-type cytochromes; once thought to export heme, this seems not to be the case, but its exact role is uncertain. Responsible for energy coupling to the transport system. This chain is Cytochrome c biogenesis ATP-binding export protein CcmA, found in Pseudomonas syringae pv. tomato (strain ATCC BAA-871 / DC3000).